Consider the following 320-residue polypeptide: Ferrochelatase (320 aa).

2 residues coordinate Fe cation: histidine 194 and glutamate 275.

The protein belongs to the ferrochelatase family.

Its subcellular location is the cytoplasm. The catalysed reaction is heme b + 2 H(+) = protoporphyrin IX + Fe(2+). It participates in porphyrin-containing compound metabolism; protoheme biosynthesis; protoheme from protoporphyrin-IX: step 1/1. Its function is as follows. Catalyzes the ferrous insertion into protoporphyrin IX. This Vibrio atlanticus (strain LGP32) (Vibrio splendidus (strain Mel32)) protein is Ferrochelatase.